We begin with the raw amino-acid sequence, 245 residues long: tRNA pseudouridine synthase A (245 aa).

Aspartate 52 serves as the catalytic Nucleophile. Tyrosine 111 contributes to the substrate binding site.

It belongs to the tRNA pseudouridine synthase TruA family. In terms of assembly, homodimer.

It catalyses the reaction uridine(38/39/40) in tRNA = pseudouridine(38/39/40) in tRNA. Functionally, formation of pseudouridine at positions 38, 39 and 40 in the anticodon stem and loop of transfer RNAs. This chain is tRNA pseudouridine synthase A, found in Wolbachia pipientis wMel.